A 489-amino-acid polypeptide reads, in one-letter code: Protein LMBR1L (489 aa).

Topologically, residues 1-21 are extracellular; sequence MEAPDCEVLSVREQLFHERIR. Positions 1–59 are interaction with LGB; that stretch reads MEAPDCEVLSVREQLFHERIRECIISTLLFATLYILCHIFLTRFKKPAEFTTVDDADAT. The LCN1-binding stretch occupies residues 1–76; it reads MEAPDCEVLS…LCTFTLAIAL (76 aa). A helical membrane pass occupies residues 22–42; it reads ECIISTLLFATLYILCHIFLT. Residues 43–66 are Cytoplasmic-facing; sequence RFKKPAEFTTVDDADATVNKIALE. Residues 67–87 traverse the membrane as a helical segment; sequence LCTFTLAIALGAVLLLPFSII. The Extracellular portion of the chain corresponds to 88–114; the sequence is SNEVLLSLPRNYYIQWLNGSLIHGLWN. The chain crosses the membrane as a helical span at residues 115-135; that stretch reads LVFLFSNLSLIFLMPFAYFFT. Residues 136–154 are Cytoplasmic-facing; sequence ESEGFAGSRKGVLGRVYET. Residues 155–175 traverse the membrane as a helical segment; it reads VVMLMLLTLLVLGMVWVASAI. Residues 176 to 196 are Extracellular-facing; it reads VDNNKASRESLYDFWEYYLPY. The helical transmembrane segment at 197–217 threads the bilayer; it reads LYSCISFLGVLLLLVCTPLGL. Residues 218 to 305 are Cytoplasmic-facing; the sequence is ARMFSVTGKL…NLGYPLAMLC (88 aa). A helical transmembrane segment spans residues 306-326; it reads LLVLTGLSVLIVAIHILELLI. The Extracellular portion of the chain corresponds to 327–350; the sequence is DEAAMPRGMQGASLGQVSFSKLGS. A helical transmembrane segment spans residues 351–371; that stretch reads FGAVVQVVLIFYLMVSSVVGF. Over 372–388 the chain is Cytoplasmic; that stretch reads YSSPLFRSLRPRWHDTA. Residues 389–409 traverse the membrane as a helical segment; sequence MTQIIGNCVCLLVLSSALPVF. Residues 410–431 lie on the Extracellular side of the membrane; it reads SRTLGLTRFDLLGDFGRFNWLG. The chain crosses the membrane as a helical span at residues 432–452; it reads NFYIVFLYNAAFAGLTTLCLV. Residues 453-489 are Cytoplasmic-facing; it reads KTFTAAVRAELIRAFGLDRLPLPVSGFPRASRKTQHQ.

The protein belongs to the LIMR family. Dimer. Can also form higher oligomers. Interacts with LCN1; this interaction mediates the endocytosis of LCN1. Interacts with UBAC2, FAF2, VCP, AMFR, ZNRF3, CTNNB1, LRP6, GSK3A, GSK3B, FZD6, DVL2 and RNF43. Interaction with LGB and SCGB1A1 is controversial.

The protein localises to the cell membrane. The protein resides in the endoplasmic reticulum membrane. Its function is as follows. Plays an essential role in lymphocyte development by negatively regulating the canonical Wnt signaling pathway. In association with UBAC2 and E3 ubiquitin-protein ligase AMFR, promotes the ubiquitin-mediated degradation of CTNNB1 and Wnt receptors FZD6 and LRP6. LMBR1L stabilizes the beta-catenin destruction complex that is required for regulating CTNNB1 levels. Acts as a LCN1 receptor and can mediate its endocytosis. The chain is Protein LMBR1L (LMBR1L) from Macaca fascicularis (Crab-eating macaque).